A 381-amino-acid polypeptide reads, in one-letter code: Alkanesulfonate monooxygenase (381 aa).

This sequence belongs to the SsuD family. Homotetramer.

The catalysed reaction is an alkanesulfonate + FMNH2 + O2 = an aldehyde + FMN + sulfite + H2O + 2 H(+). Its function is as follows. Catalyzes the desulfonation of aliphatic sulfonates. The chain is Alkanesulfonate monooxygenase from Shigella flexneri serotype 5b (strain 8401).